The sequence spans 178 residues: MSGGKYVDSEGHLYTLPIREQGNIYKPNNKAMAEDMNEKQVYDAHTKEIDLVNRDPKHLNDDVVKIDFEDVIAEPEGTHSFDGIWKASFTTFTVTKYWFYRLLSGIFGIPMALIWGVYFAILSFLHIWAVVPCIKSFLIEIQCISRVYSIYVHTFCDPLFEAIGKIFSNIRISTQKEI.

Position 2 is an N-acetylserine (S2). S2 carries the post-translational modification Phosphoserine. The interval 2–94 is required for homooligomerization; it reads SGGKYVDSEG…WKASFTTFTV (93 aa). The Cytoplasmic segment spans residues 2 to 104; the sequence is SGGKYVDSEG…TKYWFYRLLS (103 aa). K5 bears the N6-acetyllysine; alternate mark. K5 is covalently cross-linked (Glycyl lysine isopeptide (Lys-Gly) (interchain with G-Cter in ubiquitin); alternate). Y6 carries the phosphotyrosine modification. S9 carries the phosphoserine modification. Y14 is modified (phosphotyrosine; by ABL1). Position 25 is a phosphotyrosine (Y25). Glycyl lysine isopeptide (Lys-Gly) (interchain with G-Cter in ubiquitin) cross-links involve residues K26, K30, K39, K47, and K57. Residues 82 to 94 form an interaction with CAVIN3 region; sequence DGIWKASFTTFTV. The helical intramembrane region spans 105-125; it reads GIFGIPMALIWGVYFAILSFL. Residues 126 to 178 lie on the Cytoplasmic side of the membrane; that stretch reads HIWAVVPCIKSFLIEIQCISRVYSIYVHTFCDPLFEAIGKIFSNIRISTQKEI. Positions 131–142 are interacts with SPRY1, SPRY2, SPRY3 and SPRY4; sequence VPCIKSFLIEIQ. 3 S-palmitoyl cysteine lipidation sites follow: C133, C143, and C156. Positions 149–160 are interacts with SPRY1, SPRY2, and SPRY4; the sequence is SIYVHTFCDPLF. Residues 167 to 178 form an interacts with SPRY1, SPRY2, SPRY3 and SPRY4 region; the sequence is FSNIRISTQKEI.

This sequence belongs to the caveolin family. In terms of assembly, homooligomer. Interacts with GLIPR2. Interacts with NOSTRIN. Interacts with SNAP25 and STX1A. Interacts (via the N-terminus) with DPP4; the interaction is direct. Interacts with CTNNB1, CDH1 and JUP. Interacts with PACSIN2; this interaction induces membrane tubulation. Interacts with SLC7A9. Interacts with BMX and BTK. Interacts with TGFBR1. Interacts with CAVIN3 (via leucine-zipper domain) in a cholesterol-sensitive manner. Interacts with CAVIN1. Interacts with EHD2 in a cholesterol-dependent manner. Forms a ternary complex with UBXN6 and VCP; mediates CAV1 targeting to lysosomes for degradation. Interacts with ABCG1; this interaction regulates ABCG1-mediated cholesterol efflux. Interacts with NEU3; this interaction enhances NEU3 sialidase activity within caveola. Interacts (via C-terminus) with SPRY1, SPRY2 (via C-terminus), SPRY3, and SPRY4. Interacts with IGFBP5; this interaction allows trafficking of IGFBP5 from the plasma membrane to the nucleus. In terms of processing, phosphorylated at Tyr-14 by ABL1 in response to oxidative stress. Post-translationally, ubiquitinated. Undergo monoubiquitination and multi- and/or polyubiquitination. Monoubiquitination of N-terminal lysines promotes integration in a ternary complex with UBXN6 and VCP which promotes oligomeric CAV1 targeting to lysosomes for degradation. Ubiquitinated by ZNRF1; leading to degradation and modulation of the TLR4-mediated immune response.

The protein localises to the golgi apparatus membrane. Its subcellular location is the cell membrane. It is found in the membrane. It localises to the caveola. The protein resides in the membrane raft. In terms of biological role, may act as a scaffolding protein within caveolar membranes. Forms a stable heterooligomeric complex with CAV2 that targets to lipid rafts and drives caveolae formation. Mediates the recruitment of CAVIN proteins (CAVIN1/2/3/4) to the caveolae. Interacts directly with G-protein alpha subunits and can functionally regulate their activity. Involved in the costimulatory signal essential for T-cell receptor (TCR)-mediated T-cell activation. Its binding to DPP4 induces T-cell proliferation and NF-kappa-B activation in a T-cell receptor/CD3-dependent manner. Recruits CTNNB1 to caveolar membranes and may regulate CTNNB1-mediated signaling through the Wnt pathway. Negatively regulates TGFB1-mediated activation of SMAD2/3 by mediating the internalization of TGFBR1 from membrane rafts leading to its subsequent degradation. Binds 20(S)-hydroxycholesterol (20(S)-OHC). In Echinops telfairi (Lesser hedgehog tenrec), this protein is Caveolin-1 (CAV1).